Reading from the N-terminus, the 995-residue chain is Protein translocase subunit SecA (995 aa).

ATP-binding positions include Q86, 104–108, and D535; that span reads GEGKT. Residues 883 to 911 are disordered; that stretch reads AQTVSSDGNGEVVRKPQRRSTPQIGRNEL. 4 residues coordinate Zn(2+): C912, C914, C923, and H924. Positions 939 to 995 are disordered; sequence PSAPPASKALKSTPATQTAVAEEAAKIQAAINSGKLPPTQTTPRGRQAPSVPRGKKR. Positions 957 to 969 are enriched in low complexity; sequence AVAEEAAKIQAAI.

The protein belongs to the SecA family. In terms of assembly, monomer and homodimer. Part of the essential Sec protein translocation apparatus which comprises SecA, SecYEG and auxiliary proteins SecDF. Other proteins may also be involved. Zn(2+) is required as a cofactor.

Its subcellular location is the cell membrane. The protein resides in the cytoplasm. The catalysed reaction is ATP + H2O + cellular proteinSide 1 = ADP + phosphate + cellular proteinSide 2.. In terms of biological role, part of the Sec protein translocase complex. Interacts with the SecYEG preprotein conducting channel. Has a central role in coupling the hydrolysis of ATP to the transfer of proteins into and across the cell membrane, serving as an ATP-driven molecular motor driving the stepwise translocation of polypeptide chains across the membrane. This Chloroflexus aurantiacus (strain ATCC 29366 / DSM 635 / J-10-fl) protein is Protein translocase subunit SecA.